The following is a 312-amino-acid chain: Olfactory receptor 2J1 (312 aa).

Residues 1–26 (MLMKKNASFEDFFLLLGFSNWPHLEV) lie on the Extracellular side of the membrane. The N-linked (GlcNAc...) asparagine glycan is linked to N6. The helical transmembrane segment at 27-50 (VLFVVILIFYLITLIGNLFIIILS) threads the bilayer. At 51 to 58 (YLDSHLHT) the chain is on the cytoplasmic side. Residues 59–80 (PMYFFLSNLSFLDLCYTTSSIP) form a helical membrane-spanning segment. The Extracellular segment spans residues 81-101 (QLLVNLWGPEKTISYAGCTVQ). C98 and C190 form a disulfide bridge. A helical membrane pass occupies residues 102–121 (LYFVLALGTAECVLLVVMSY). Residues 122–140 (DRYAAVCRPLHYTVLMHPR) are Cytoplasmic-facing. Residues 141–159 (FCRLLAAASWVSGFTTSAL) traverse the membrane as a helical segment. Residues 160–196 (HSSFTFWIPLCRHRLVDHFFCEVPALLRLSCVDTQAN) lie on the Extracellular side of the membrane. The chain crosses the membrane as a helical span at residues 197–220 (ELTLMVMSSIFVLIPLILILTSYG). At 221–237 (AIARAVLSMQSTTGLQK) the chain is on the cytoplasmic side. The chain crosses the membrane as a helical span at residues 238 to 260 (VLRTCGAHLMVVSLFFIPVMCMY). The Extracellular segment spans residues 261 to 273 (LQPPSENSQDQGK). The chain crosses the membrane as a helical span at residues 274–293 (FIALFYTVVTPSLNPLIYTF). At 294–312 (RNKDVRGAVKRLMGWEWGM) the chain is on the cytoplasmic side.

The protein belongs to the G-protein coupled receptor 1 family.

It localises to the cell membrane. Functionally, odorant receptor. The protein is Olfactory receptor 2J1 (OR2J1) of Homo sapiens (Human).